We begin with the raw amino-acid sequence, 152 residues long: Large ribosomal subunit protein bL9 (152 aa).

The interval Gln41–Glu61 is disordered. The span at Ala49–Glu61 shows a compositional bias: basic and acidic residues.

It belongs to the bacterial ribosomal protein bL9 family.

Functionally, binds to the 23S rRNA. In Levilactobacillus brevis (strain ATCC 367 / BCRC 12310 / CIP 105137 / JCM 1170 / LMG 11437 / NCIMB 947 / NCTC 947) (Lactobacillus brevis), this protein is Large ribosomal subunit protein bL9.